The primary structure comprises 461 residues: Pyruvate kinase (461 aa).

Arginine 46 provides a ligand contact to substrate. Residues asparagine 48 and aspartate 80 each contribute to the K(+) site. An ATP-binding site is contributed by 48-51 (NLAH). Positions 87 and 165 each coordinate ATP. Mg(2+) is bound at residue glutamate 232. Substrate-binding residues include glycine 255, aspartate 256, and threonine 288. Aspartate 256 contributes to the Mg(2+) binding site.

Belongs to the pyruvate kinase family. Homotetramer. It depends on a divalent metal cation as a cofactor.

It carries out the reaction pyruvate + ATP = phosphoenolpyruvate + ADP + H(+). Its pathway is carbohydrate degradation; glycolysis; pyruvate from D-glyceraldehyde 3-phosphate: step 5/5. Not activated by classical allosteric effectors. The polypeptide is Pyruvate kinase (pyk) (Pyrobaculum aerophilum (strain ATCC 51768 / DSM 7523 / JCM 9630 / CIP 104966 / NBRC 100827 / IM2)).